A 122-amino-acid chain; its full sequence is Histone H2B, gonadal (122 aa).

The disordered stretch occupies residues 1–31; it reads MPPKPSGKGQKKAGKAKGAPRTDKKRRRKRK. A N,N-dimethylproline modification is found at Pro2. Residue Ser109 is glycosylated (O-linked (GlcNAc) serine). Lys117 is covalently cross-linked (Glycyl lysine isopeptide (Lys-Gly) (interchain with G-Cter in ubiquitin)).

This sequence belongs to the histone H2B family. The nucleosome is a histone octamer containing two molecules each of H2A, H2B, H3 and H4 assembled in one H3-H4 heterotetramer and two H2A-H2B heterodimers. The octamer wraps approximately 147 bp of DNA. Post-translationally, monoubiquitination of Lys-117 gives a specific tag for epigenetic transcriptional activation and is also prerequisite for histone H3 'Lys-4' and 'Lys-79' methylation. GlcNAcylation at Ser-109 promotes monoubiquitination of Lys-117. It fluctuates in response to extracellular glucose, and associates with transcribed genes.

It localises to the nucleus. Its subcellular location is the chromosome. Its function is as follows. Core component of nucleosome. Nucleosomes wrap and compact DNA into chromatin, limiting DNA accessibility to the cellular machineries which require DNA as a template. Histones thereby play a central role in transcription regulation, DNA repair, DNA replication and chromosomal stability. DNA accessibility is regulated via a complex set of post-translational modifications of histones, also called histone code, and nucleosome remodeling. The protein is Histone H2B, gonadal of Asterias rubens (Common European starfish).